Here is a 906-residue protein sequence, read N- to C-terminus: Toll-like receptor 12 (906 aa).

An N-terminal signal peptide occupies residues 1 to 21 (MGRYWLLPGLLLSLPLVTGWS). Over 22 to 709 (TSNCLVTEGS…DHCPQTLELK (688 aa)) the chain is Extracellular. N-linked (GlcNAc...) asparagine glycosylation is present at asparagine 59. LRR repeat units follow at residues 91–114 (FPGL…LRGL), 115–140 (GQLQ…AFSD), 142–170 (ISLQ…QWLG), 198–222 (SWTL…SLQG), 224–247 (QVEI…GLQK), 267–290 (HFEL…ALAS), 291–314 (CHSL…FLTA), 316–338 (PRLQ…MNET), 341–364 (VSGL…AFSC), 366–388 (PHLR…LFQE), 389–412 (LQQL…WLAA), 414–436 (PALT…GFWG), 462–484 (LTSL…PAIF), 485–508 (PSLE…NASG), and 510–533 (FPAL…GTSN). N-linked (GlcNAc...) asparagine glycosylation is present at asparagine 336. Residue asparagine 505 is glycosylated (N-linked (GlcNAc...) asparagine). N-linked (GlcNAc...) asparagine glycosylation is present at asparagine 552. 2 LRR repeats span residues 562 to 586 (LPSL…QLEE) and 591 to 614 (LPQL…AFQR). A helical transmembrane segment spans residues 710 to 730 (LFLASSALVFMLIALPLLQEA). Topologically, residues 731–906 (RNSWIPYLQA…FWTWLRSRLG (176 aa)) are cytoplasmic. The TIR domain maps to 759–905 (FLFDVFVSHC…GFWTWLRSRL (147 aa)).

This sequence belongs to the Toll-like receptor family. Binds MYD88 via their respective TIR domains. Macrophages, liver, kidney and bladder epithelial cells.

The protein localises to the membrane. Functionally, participates in the innate immune response to microbial agents. Acts via MYD88 and TRAF6, leading to NF-kappa-B activation, cytokine secretion and the inflammatory response. Plays a role in preventing infection of internal organs of the urogenital system. This Mus musculus (Mouse) protein is Toll-like receptor 12.